The primary structure comprises 57 residues: Beta-defensin 3 (57 aa).

Gln16 bears the Pyrrolidone carboxylic acid mark. 3 cysteine pairs are disulfide-bonded: Cys24-Cys53, Cys31-Cys46, and Cys36-Cys54.

The protein belongs to the beta-defensin family. In terms of tissue distribution, neutrophilic granules.

The protein resides in the secreted. Has bactericidal activity. Active against E.coli ML35 and S.aureus 502A. The polypeptide is Beta-defensin 3 (DEFB3) (Bos taurus (Bovine)).